The sequence spans 31 residues: Cytochrome b6-f complex subunit 6 (31 aa).

A helical transmembrane segment spans residues 4 to 24 (VIAYLGLLASVLIGTIVIYLG).

Belongs to the PetL family. As to quaternary structure, the 4 large subunits of the cytochrome b6-f complex are cytochrome b6, subunit IV (17 kDa polypeptide, PetD), cytochrome f and the Rieske protein, while the 4 small subunits are PetG, PetL, PetM and PetN. The complex functions as a dimer.

Its subcellular location is the plastid. The protein localises to the chloroplast thylakoid membrane. In terms of biological role, component of the cytochrome b6-f complex, which mediates electron transfer between photosystem II (PSII) and photosystem I (PSI), cyclic electron flow around PSI, and state transitions. PetL is important for photoautotrophic growth as well as for electron transfer efficiency and stability of the cytochrome b6-f complex. This is Cytochrome b6-f complex subunit 6 from Oltmannsiellopsis viridis (Marine flagellate).